Reading from the N-terminus, the 230-residue chain is Phosducin-like protein 1 (230 aa).

Met-1 carries the N-acetylmethionine modification. The Phosducin domain maps to Ala-16 to Lys-166. Residues Asp-25 to Asp-79 are a coiled coil. Residues Tyr-81–Ile-230 are thioredoxin fold.

The protein belongs to the phosducin family. Interacts with the G protein beta-gamma subunit complex (STE4-STE18 complex).

Its subcellular location is the cytoplasm. Its function is as follows. Not essential for growth. Inhibits early G-protein signaling events following pheromone stimulation. May help create heterodimerizable beta-tubulin by facilitating the efficient transfer of nascent beta-tubulin polypeptides to the folding apparatus. The sequence is that of Phosducin-like protein 1 (PLP1) from Saccharomyces cerevisiae (strain ATCC 204508 / S288c) (Baker's yeast).